A 67-amino-acid polypeptide reads, in one-letter code: Probable Sec-independent protein translocase protein TatE (67 aa).

Residues 1–21 (MGEISITKLLVVAALVVLLFG) form a helical membrane-spanning segment. The tract at residues 45–67 (DEDAGAKKDANGDLPAEKLTHKE) is disordered.

This sequence belongs to the TatA/E family. TatE subfamily.

It localises to the cell inner membrane. In terms of biological role, part of the twin-arginine translocation (Tat) system that transports large folded proteins containing a characteristic twin-arginine motif in their signal peptide across membranes. TatE shares overlapping functions with TatA. The protein is Probable Sec-independent protein translocase protein TatE of Escherichia fergusonii (strain ATCC 35469 / DSM 13698 / CCUG 18766 / IAM 14443 / JCM 21226 / LMG 7866 / NBRC 102419 / NCTC 12128 / CDC 0568-73).